Consider the following 451-residue polypeptide: CBL-interacting protein kinase 22 (451 aa).

One can recognise a Protein kinase domain in the interval 26 to 301; sequence YELGRVLGQG…IGEIFDHPWL (276 aa). Residues 32–40 and Lys-55 each bind ATP; that span reads LGQGASSKV. Asp-165 (proton acceptor) is an active-site residue. An activation loop region spans residues 183 to 216; it reads DFGLSAFADADQHLGATDGLAATHCGSPAYVAPE. Positions 330 to 356 constitute an NAF domain; sequence ELEQAMELNAFDIIGFASGCDLSGLIG. The PPI stretch occupies residues 361-389; the sequence is RVRFVLPGGDSKSVLDKVEKLGREEGLVV.

The protein belongs to the protein kinase superfamily. CAMK Ser/Thr protein kinase family. SNF1 subfamily. Requires Mn(2+) as cofactor.

The catalysed reaction is L-seryl-[protein] + ATP = O-phospho-L-seryl-[protein] + ADP + H(+). It carries out the reaction L-threonyl-[protein] + ATP = O-phospho-L-threonyl-[protein] + ADP + H(+). Its function is as follows. CIPK serine-threonine protein kinases interact with CBL proteins. Binding of a CBL protein to the regulatory NAF domain of CIPK protein lead to the activation of the kinase in a calcium-dependent manner. The polypeptide is CBL-interacting protein kinase 22 (CIPK22) (Oryza sativa subsp. japonica (Rice)).